We begin with the raw amino-acid sequence, 294 residues long: Eukaryotic translation initiation factor 3 subunit G (294 aa).

Disordered regions lie at residues 1-43 (MPSA…ENKI) and 160-211 (EDDG…RDET). Positions 194–211 (GANRRGETMPSRSQRDET) are enriched in basic and acidic residues. The region spanning 212–290 (ATIRVTNLSE…LILNVEWAKP (79 aa)) is the RRM domain.

This sequence belongs to the eIF-3 subunit G family. As to quaternary structure, component of the eukaryotic translation initiation factor 3 (eIF-3) complex.

The protein resides in the cytoplasm. Functionally, RNA-binding component of the eukaryotic translation initiation factor 3 (eIF-3) complex, which is involved in protein synthesis of a specialized repertoire of mRNAs and, together with other initiation factors, stimulates binding of mRNA and methionyl-tRNAi to the 40S ribosome. The eIF-3 complex specifically targets and initiates translation of a subset of mRNAs involved in cell proliferation. This subunit can bind 18S rRNA. This chain is Eukaryotic translation initiation factor 3 subunit G, found in Nematostella vectensis (Starlet sea anemone).